Consider the following 487-residue polypeptide: Arginine ADP-riboxanase CopC (487 aa).

A compositionally biased stretch (polar residues) spans 1-12 (MRVENHSPSLSK). Positions 1-27 (MRVENHSPSLSKLNPPEAGSGDPTAIG) are disordered. Residues H137, Q138, S139, L143, A150, A152, N154, and L157 each contribute to the NAD(+) site. H137 provides a ligand contact to nicotinamide. ADP-D-ribose is bound by residues S139 and L143. The ADP-D-ribose site is built by A152, N154, L157, G166, N167, T168, and F183. Residue N167 participates in NAD(+) binding. An NAD(+)-binding site is contributed by F183. 4 residues coordinate nicotinamide: F183, F184, H202, and F207. H202 provides a ligand contact to NAD(+). ADP-D-ribose-binding residues include F207 and D230. NAD(+) contacts are provided by D230 and E325. E325 contributes to the nicotinamide binding site. E325 is a catalytic residue. ANK repeat units lie at residues 368–398 (DAVT…EAGD) and 444–476 (SGET…LLSE).

Belongs to the OspC family. In terms of assembly, interacts with host calmodulin (CALM1, CALM2 and/or CALM3); specifically interacts with the apo form of calmodulin and calmodulin-binding is required to mediate arginine ADP-riboxanation of host caspases.

The protein localises to the secreted. It is found in the host cytoplasm. The enzyme catalyses L-arginyl-[protein] + NAD(+) = ADP-riboxanated L-argininyl-[protein] + nicotinamide + NH4(+) + H(+). Its activity is regulated as follows. Interaction with host calmodulin (CALM1, CALM2 and/or CALM3) is required to mediate arginine ADP-riboxanation of host caspases. ADP-riboxanase effector that inhibits host cell programmed cell death. Acts by mediating arginine ADP-riboxanation of host caspases (CASP3, CASP7, CASP8 and CASP9), blocking their processing and activation. ADP-riboxanation of host apoptotic caspases (CASP3, CASP7, CASP8 and CASP9) prevents their activation, thereby inhibiting host cell apoptosis. ADP-riboxanation of host CASP8 also inhibits host cell necroptosis. ADP-riboxanation of host CASP3 also abolishes pyroptosis by preventing its ability to cleave GSDME. May also able to inactivate CASP4/CASP11, blocking inhibiting LPS-induced pyroptosis; however this activity is unsure in vivo. ADP-riboxanation takes place in several steps: CopC first binds host caspases and NAD(+); NAD(+) is hydrolyzed to nicotinamide and ADP-D-ribose. CopC then transfers the ADP-D-ribose to the modified arginine of caspases and forms the ADP-D-ribose-deacylization on arginine, leading to deamination to remove one N-omega group on target arginine. The polypeptide is Arginine ADP-riboxanase CopC (Chromobacterium violaceum (strain ATCC 12472 / DSM 30191 / JCM 1249 / CCUG 213 / NBRC 12614 / NCIMB 9131 / NCTC 9757 / MK)).